The chain runs to 107 residues: Large ribosomal subunit protein uL24 (107 aa).

The protein belongs to the universal ribosomal protein uL24 family. As to quaternary structure, part of the 50S ribosomal subunit.

One of two assembly initiator proteins, it binds directly to the 5'-end of the 23S rRNA, where it nucleates assembly of the 50S subunit. Functionally, one of the proteins that surrounds the polypeptide exit tunnel on the outside of the subunit. This is Large ribosomal subunit protein uL24 from Fervidobacterium nodosum (strain ATCC 35602 / DSM 5306 / Rt17-B1).